The following is a 156-amino-acid chain: Transcriptional repressor NrdR (156 aa).

The segment at 3–34 (CPFCHSDNDKVQDSRTAEAGYVVRRKRLCQTC) is a zinc-finger region. Residues 49–139 (VRVVKSDETR…VYRDFDDAKD (91 aa)) form the ATP-cone domain.

It belongs to the NrdR family. Zn(2+) is required as a cofactor.

Functionally, negatively regulates transcription of bacterial ribonucleotide reductase nrd genes and operons by binding to NrdR-boxes. The polypeptide is Transcriptional repressor NrdR (Rhodopirellula baltica (strain DSM 10527 / NCIMB 13988 / SH1)).